Reading from the N-terminus, the 76-residue chain is Conotoxin TsMLCL-03 (76 aa).

Positions 1-19 are cleaved as a signal peptide; the sequence is MLCLPVFIILLLLASPAAP. Residues 20 to 44 constitute a propeptide that is removed on maturation; that stretch reads NPLERRIQSDLIRTALEDADMKTPK.

Belongs to the conotoxin T superfamily. Contains 2 disulfide bonds that can be either 'C1-C3, C2-C4' or 'C1-C4, C2-C3', since these disulfide connectivities have been observed for conotoxins with cysteine framework V (for examples, see AC P0DQQ7 and AC P81755). As to expression, expressed by the venom duct.

The protein resides in the secreted. The chain is Conotoxin TsMLCL-03 from Conus tessulatus (Tessellate cone).